A 795-amino-acid chain; its full sequence is Phenylalanine--tRNA ligase beta subunit (795 aa).

Residues 39–148 (AGTFNGVKVG…IDAPIGMDFR (110 aa)) enclose the tRNA-binding domain. Residues 401–476 (PKPNKVALRR…RIYGYDNIPN (76 aa)) enclose the B5 domain. Residues D454, D460, E463, and E464 each coordinate Mg(2+). The 94-residue stretch at 701–794 (SKFPANRRDI…VSEKFGASLR (94 aa)) folds into the FDX-ACB domain.

Belongs to the phenylalanyl-tRNA synthetase beta subunit family. Type 1 subfamily. In terms of assembly, tetramer of two alpha and two beta subunits. The cofactor is Mg(2+).

Its subcellular location is the cytoplasm. It carries out the reaction tRNA(Phe) + L-phenylalanine + ATP = L-phenylalanyl-tRNA(Phe) + AMP + diphosphate + H(+). This is Phenylalanine--tRNA ligase beta subunit from Vibrio vulnificus (strain YJ016).